A 435-amino-acid chain; its full sequence is MIGRISQPLLNTSQKFMAPAARTLMLHEHHGMKILQNYEIKVPPFGVAQDAETAFSEAKRIGGKDYVVKAQVLAGGRGKGRFSSGLQGGVQIVFTPDEVKQKAGMMIGANLITKQTDHRGKKCEEVMVCKRLFTRREYYFSITLDRNTNGPIVIASSQGGVNIEEVAATNPDAIVKMPIDVNVGITKELAHEIAVKMGFSKDCEQQASEIIEKLYQMFKGSDATLVEINPMAEDVNGDVYCMDCKLLLDSNAEFRQAKLFDLKDKKQEDELEIRAAAANLNYIRLDGTIGCMVNGAGLAMATMDIIKLHGGEPANFLDVGGGATVEQVTEAFKIITADKDKVSAILVNIFGGIMRCDVIAQGIIQAARELDLKIPIVVRLQGTKVEDAKALIATSQLRILPCDNLDEAAKMVVKLSNIVDLARATNVDVKFELSI.

The transit peptide at 1-20 (MIGRISQPLLNTSQKFMAPA) directs the protein to the mitochondrion. One can recognise an ATP-grasp domain in the interval 32-259 (MKILQNYEIK…SNAEFRQAKL (228 aa)). ATP is bound by residues K69 and 76 to 78 (GRG). Mg(2+) is bound by residues N229 and D243. Substrate contacts are provided by residues N294 and 352–354 (GIM).

The protein belongs to the succinate/malate CoA ligase beta subunit family. ATP-specific subunit beta subfamily. As to quaternary structure, heterodimer of an alpha and a beta subunit. The beta subunit determines specificity for ATP. It depends on Mg(2+) as a cofactor.

The protein localises to the mitochondrion. It catalyses the reaction succinate + ATP + CoA = succinyl-CoA + ADP + phosphate. Its pathway is carbohydrate metabolism; tricarboxylic acid cycle; succinate from succinyl-CoA (ligase route): step 1/1. Its function is as follows. ATP-specific succinyl-CoA synthetase functions in the citric acid cycle (TCA), coupling the hydrolysis of succinyl-CoA to the synthesis of ATP and thus represents the only step of substrate-level phosphorylation in the TCA. The beta subunit provides nucleotide specificity of the enzyme and binds the substrate succinate, while the binding sites for coenzyme A and phosphate are found in the alpha subunit. This chain is Succinate--CoA ligase [ADP-forming] subunit beta, mitochondrial, found in Caenorhabditis elegans.